Here is a 202-residue protein sequence, read N- to C-terminus: Guanylate kinase (202 aa).

The 183-residue stretch at 18-200 (LKPVVVFGPS…AYKQLEAICL (183 aa)) folds into the Guanylate kinase-like domain. 25 to 32 (GPSGVGKS) provides a ligand contact to ATP.

This sequence belongs to the guanylate kinase family.

It carries out the reaction GMP + ATP = GDP + ADP. Its function is as follows. Essential for recycling GMP and indirectly, cGMP. This is Guanylate kinase from Schizosaccharomyces pombe (strain 972 / ATCC 24843) (Fission yeast).